The sequence spans 123 residues: Large ribosomal subunit protein uL14 (123 aa).

It belongs to the universal ribosomal protein uL14 family. Part of the 50S ribosomal subunit. Forms a cluster with proteins L3 and L19. In the 70S ribosome, L14 and L19 interact and together make contacts with the 16S rRNA in bridges B5 and B8.

In terms of biological role, binds to 23S rRNA. Forms part of two intersubunit bridges in the 70S ribosome. This Escherichia coli O139:H28 (strain E24377A / ETEC) protein is Large ribosomal subunit protein uL14.